The chain runs to 296 residues: Guided entry of tail-anchored proteins factor CAMLG (296 aa).

A disordered region spans residues 1-79; it reads MESMAVATDG…SDKLNSLSVP (79 aa). The Cytoplasmic portion of the chain corresponds to 1–189; it reads MESMAVATDG…NTTEEFDSFR (189 aa). At Ser-55 the chain carries Phosphoserine. Residues 61 to 72 are compositionally biased toward basic and acidic residues; that stretch reads SQTKSKQQDSDK. A helical membrane pass occupies residues 190-207; it reads IFRLVGCALLALGVRAFV. Topologically, residues 208–212 are lumenal; sequence CKYLS. The cysteines at positions 208 and 284 are disulfide-linked. Residues 213–231 traverse the membrane as a helical segment; the sequence is IFAPFLTLQLAYMGLYKYF. Residues 232 to 269 are Cytoplasmic-facing; the sequence is PKSEKKIKTTVLTAALLLSGIPAEVINRSMDTYSKMGE. The chain crosses the membrane as a helical span at residues 270-288; the sequence is VFTDLCVYFFTFIFCHELL. Topologically, residues 289 to 296 are lumenal; it reads DYWGSEVP.

In terms of assembly, component of the Golgi to ER traffic (GET) complex, which is composed of GET1/WRB, CAMLG/GET2 and GET3/TRC40. Within the complex, GET1 and CAMLG form a heterotetramer which is stabilized by phosphatidylinositol binding and which binds to the GET3 homodimer. Interacts (via C-terminus) with GET1. Interacts (via N-terminus) with GET3. GET3 shows a higher affinity for CAMLG than for GET1. Interacts (via N-terminus) with TNFRSF13B/TACI (via C-terminus). As to quaternary structure, (Microbial infection) Interacts with human herpes virus 8/HHV-8 protein K7; this interaction modulates intracellular calcium concentration. In terms of tissue distribution, ubiquitous. Highest levels in brain, testis and ovary.

It localises to the endoplasmic reticulum membrane. Required for the post-translational delivery of tail-anchored (TA) proteins to the endoplasmic reticulum. Together with GET1/WRB, acts as a membrane receptor for soluble GET3/TRC40, which recognizes and selectively binds the transmembrane domain of TA proteins in the cytosol. Required for the stability of GET1. Stimulates calcium signaling in T cells through its involvement in elevation of intracellular calcium. Essential for the survival of peripheral follicular B cells. This is Guided entry of tail-anchored proteins factor CAMLG from Homo sapiens (Human).